The sequence spans 257 residues: Snake venom serine protease KN9 (257 aa).

An N-terminal signal peptide occupies residues 1-18 (MVLIRVLANLLILQLSYA). Residues 19-24 (QKSSEL) constitute a propeptide that is removed on maturation. Residues 25–248 (VVGGDECNIN…HLDWIKSIIA (224 aa)) enclose the Peptidase S1 domain. 5 cysteine pairs are disulfide-bonded: Cys-31-Cys-162, Cys-49-Cys-65, Cys-141-Cys-209, Cys-173-Cys-188, and Cys-199-Cys-224. Catalysis depends on His-64, which acts as the Charge relay system. Asn-102 carries an N-linked (GlcNAc...) asparagine glycan. Catalysis depends on Asp-109, which acts as the Charge relay system. 2 N-linked (GlcNAc...) asparagine glycosylation sites follow: Asn-120 and Asn-121. The active-site Charge relay system is the Ser-203.

The protein belongs to the peptidase S1 family. Snake venom subfamily. Monomer. Expressed by the venom gland.

It is found in the secreted. Its function is as follows. Snake venom serine protease that may act in the hemostasis system of the prey. This Trimeresurus stejnegeri (Chinese green tree viper) protein is Snake venom serine protease KN9.